The chain runs to 471 residues: Alpha-amylase (471 aa).

Glutamine 1 is subject to Pyrrolidone carboxylic acid. Cysteine 28 and cysteine 84 are disulfide-bonded. Positions 98, 146, and 155 each coordinate Ca(2+). Cysteine 134 and cysteine 148 form a disulfide bridge. Arginine 183 lines the chloride pocket. The Nucleophile role is filled by aspartate 185. Residue histidine 189 participates in Ca(2+) binding. Glutamate 222 serves as the catalytic Proton donor. Chloride contacts are provided by asparagine 285 and arginine 321. A compositionally biased stretch (polar residues) spans 326–343; that stretch reads FDFTDNDQGPPQDGSGNL. The tract at residues 326–346 is disordered; it reads FDFTDNDQGPPQDGSGNLISP. 2 disulfides stabilise this stretch: cysteine 354/cysteine 360 and cysteine 425/cysteine 437.

The protein belongs to the glycosyl hydrolase 13 family. Monomer. The cofactor is Ca(2+). Chloride is required as a cofactor.

The enzyme catalyses Endohydrolysis of (1-&gt;4)-alpha-D-glucosidic linkages in polysaccharides containing three or more (1-&gt;4)-alpha-linked D-glucose units.. The protein is Alpha-amylase of Tenebrio molitor (Yellow mealworm beetle).